Reading from the N-terminus, the 482-residue chain is uncharacterized protein (482 aa).

Positions 5–79 constitute a DWNN domain; the sequence is IYYKFKSQKD…STSVIVRRVP (75 aa). The segment at 86-108 is disordered; sequence GTAARYVSGAPKTTGARSDSVKR. A CCHC-type zinc finger spans residues 183 to 200; that stretch reads YICYRCGQKGHWIQACPT. The RING-type; degenerate zinc finger occupies 282 to 322; the sequence is CTLCKKLARNACRTPCCDKLFCEECIQTALLDSDFECPNCH. Disordered regions lie at residues 346–393 and 447–482; these read KSVL…SSAV and QVYHNNRNPPRTNSRPSNASVPPPSSLHKNPPTKTN. Residues 451–466 show a composition bias toward low complexity; it reads NNRNPPRTNSRPSNAS.

The protein resides in the nucleus. This is an uncharacterized protein from Schizosaccharomyces pombe (strain 972 / ATCC 24843) (Fission yeast).